Consider the following 231-residue polypeptide: Octanoyltransferase (231 aa).

Residues 49–224 (ADTPDEIWLL…ALQRLLPPVY (176 aa)) form the BPL/LPL catalytic domain. Residues 88-95 (RGGQITYH), 155-157 (ALG), and 168-170 (GLA) contribute to the substrate site. C186 functions as the Acyl-thioester intermediate in the catalytic mechanism.

Belongs to the LipB family.

The protein localises to the cytoplasm. The enzyme catalyses octanoyl-[ACP] + L-lysyl-[protein] = N(6)-octanoyl-L-lysyl-[protein] + holo-[ACP] + H(+). It participates in protein modification; protein lipoylation via endogenous pathway; protein N(6)-(lipoyl)lysine from octanoyl-[acyl-carrier-protein]: step 1/2. Its function is as follows. Catalyzes the transfer of endogenously produced octanoic acid from octanoyl-acyl-carrier-protein onto the lipoyl domains of lipoate-dependent enzymes. Lipoyl-ACP can also act as a substrate although octanoyl-ACP is likely to be the physiological substrate. The polypeptide is Octanoyltransferase (Aromatoleum aromaticum (strain DSM 19018 / LMG 30748 / EbN1) (Azoarcus sp. (strain EbN1))).